A 224-amino-acid chain; its full sequence is GTP-binding protein RHO3 (224 aa).

22 to 29 (GDGACGKT) lines the GTP pocket. An Effector region motif is present at residues 44-52 (YEPTVFENY). GTP-binding positions include 69-73 (DTAGQ) and 127-130 (LKCD). The segment at 205–224 (TPKGARDSAPEAESSSCTIM) is disordered. At C221 the chain carries Cysteine methyl ester. A lipid anchor (S-geranylgeranyl cysteine) is attached at C221. The propeptide at 222 to 224 (TIM) is removed in mature form.

This sequence belongs to the small GTPase superfamily. Rho family.

It localises to the cell membrane. In terms of biological role, involved in the regulation of actin polarization. Rho proteins are required for distinct steps during polarized hyphal growth of A.gossypii. The sequence is that of GTP-binding protein RHO3 (RHO3) from Eremothecium gossypii (strain ATCC 10895 / CBS 109.51 / FGSC 9923 / NRRL Y-1056) (Yeast).